The primary structure comprises 278 residues: Shikimate dehydrogenase (NADP(+)) (278 aa).

Shikimate contacts are provided by residues 19-21 (SLS) and Thr-66. Lys-70 serves as the catalytic Proton acceptor. Asp-82 provides a ligand contact to NADP(+). Residues Asn-91 and Asp-107 each coordinate shikimate. Residues 133-137 (GSGGA), 157-162 (NRTRAR), and Ile-222 contribute to the NADP(+) site. Tyr-224 provides a ligand contact to shikimate. Position 245 (Gly-245) interacts with NADP(+).

The protein belongs to the shikimate dehydrogenase family. As to quaternary structure, homodimer.

It catalyses the reaction shikimate + NADP(+) = 3-dehydroshikimate + NADPH + H(+). The protein operates within metabolic intermediate biosynthesis; chorismate biosynthesis; chorismate from D-erythrose 4-phosphate and phosphoenolpyruvate: step 4/7. Functionally, involved in the biosynthesis of the chorismate, which leads to the biosynthesis of aromatic amino acids. Catalyzes the reversible NADPH linked reduction of 3-dehydroshikimate (DHSA) to yield shikimate (SA). This is Shikimate dehydrogenase (NADP(+)) from Jannaschia sp. (strain CCS1).